Here is a 300-residue protein sequence, read N- to C-terminus: Integrin-binding sialoprotein (300 aa).

The disordered stretch occupies residues 41–258 (RFPVQSSSDS…YEQTGAHEYD (218 aa)). Serine 46, serine 51, serine 59, serine 60, serine 82, and serine 90 each carry phosphoserine. The segment covering 46–58 (SSSDSSEENGNGD) has biased composition (low complexity). A compositionally biased stretch (acidic residues) spans 59–92 (SSEEEEEEEENSNEEENNEENEDSDGNEDEDSEA). The segment covering 93–102 (ENITLSTTTL) has biased composition (polar residues). Residue asparagine 94 is glycosylated (N-linked (GlcNAc...) asparagine). A compositionally biased stretch (basic and acidic residues) spans 125–136 (KAGDIGKKSAKE). Over residues 137-160 (EESDEDEEEEEENEENEAEVDDNE) the composition is skewed to acidic residues. Serine 139 carries the post-translational modification Phosphoserine. Polar residues-rich tracts occupy residues 161–173 (QGTNGTSTNSTEV), 193–202 (VTEAQGTTVA), and 229–243 (ISGTTLPPSGKTTTP). N-linked (GlcNAc...) asparagine glycans are attached at residues asparagine 164 and asparagine 169. Serine 266 is modified (phosphoserine). The Integrin-binding motif signature appears at 272-274 (RGD). Phosphoserine is present on serine 293. 2 positions are modified to sulfotyrosine: tyrosine 299 and tyrosine 300.

Monomer. Interacts with integrins; the interaction promotes cell adhesion.

It localises to the secreted. Binds tightly to hydroxyapatite. Appears to form an integral part of the mineralized matrix. Probably important to cell-matrix interaction. Promotes adhesion and migration of various cells via the alpha-V/beta-3 integrin receptor (ITGAV:ITGB3). The protein is Integrin-binding sialoprotein (IBSP) of Sus scrofa (Pig).